The following is a 410-amino-acid chain: Exodeoxyribonuclease 7 large subunit (410 aa).

This sequence belongs to the XseA family. As to quaternary structure, heterooligomer composed of large and small subunits.

It is found in the cytoplasm. The enzyme catalyses Exonucleolytic cleavage in either 5'- to 3'- or 3'- to 5'-direction to yield nucleoside 5'-phosphates.. Functionally, bidirectionally degrades single-stranded DNA into large acid-insoluble oligonucleotides, which are then degraded further into small acid-soluble oligonucleotides. In Alkaliphilus metalliredigens (strain QYMF), this protein is Exodeoxyribonuclease 7 large subunit.